A 536-amino-acid chain; its full sequence is MLVLFETSVGYAIFKVLNEKKLQEVDSLWKEFETPEKANKIVKLKHFEKFQDTAEALAAFTALMEGKINKQLKKVLKKIVKEAHEPLAVADAKLGGVIKEKLNLSCIHSPVVNELMRGIRSQMDGLIPGVEPREMAAMCLGLAHSLSRYRLKFSADKVDTMIVQAISLLDDLDKELNNYIMRCREWYGWHFPELGKIISDNLTYCKCLQKVGDRKNYASASLSEFLSEEVEAEVKAAAEISMGTEVSEEDICNILHLCTQVIEISEYRTQLYEYLQNRMMAIAPNVTVMVGELVGARLIAHAGSLLNLAKHAASTVQILGAEKALFRALKSRRDTPKYGLIYHASLVGQSSPKHKGKISRMLAAKTVLAIRYDAFGEDSSSAMGIENRAKLEARLRILEDRGIRKISGTGKALAKAEKYEHKSEVKTYDPSGDSTLPTCSKKRKIEEVDKEDEITEKKAKKAKIKIKAEVEEEMEEEEAEEEQVVEEEPTVKKKKKKDKKKHIKEEPLSEEEPCTSTAVPSPEKKKKKKKKKDAED.

Threonine 34 bears the Phosphothreonine mark. Residue serine 109 is modified to Phosphoserine. Lysine 157 is covalently cross-linked (Glycyl lysine isopeptide (Lys-Gly) (interchain with G-Cter in SUMO2)). Residues 282–400 (IAPNVTVMVG…LEARLRILED (119 aa)) enclose the Nop domain. Residues serine 304 and serine 351 each carry the phosphoserine modification. Residues lysine 353, lysine 411, lysine 415, lysine 422, lysine 426, lysine 441, lysine 444, and lysine 465 each participate in a glycyl lysine isopeptide (Lys-Gly) (interchain with G-Cter in SUMO2) cross-link. Over residues 414–427 (AKAEKYEHKSEVKT) the composition is skewed to basic and acidic residues. Residues 414–440 (AKAEKYEHKSEVKTYDPSGDSTLPTCS) form a disordered region. Residue lysine 467 forms a Glycyl lysine isopeptide (Lys-Gly) (interchain with G-Cter in SUMO); alternate linkage. Lysine 467 participates in a covalent cross-link: Glycyl lysine isopeptide (Lys-Gly) (interchain with G-Cter in SUMO1); alternate. Residue lysine 467 forms a Glycyl lysine isopeptide (Lys-Gly) (interchain with G-Cter in SUMO2); alternate linkage. The span at 470–488 (VEEEMEEEEAEEEQVVEEE) shows a compositional bias: acidic residues. The interval 470 to 536 (VEEEMEEEEA…KKKKKKDAED (67 aa)) is disordered. Lysine 492 participates in a covalent cross-link: Glycyl lysine isopeptide (Lys-Gly) (interchain with G-Cter in SUMO2). Residues 492 to 502 (KKKKKKDKKKH) show a composition bias toward basic residues. Lysine 504 participates in a covalent cross-link: Glycyl lysine isopeptide (Lys-Gly) (interchain with G-Cter in SUMO); alternate. A Glycyl lysine isopeptide (Lys-Gly) (interchain with G-Cter in SUMO2); alternate cross-link involves residue lysine 504. Phosphoserine is present on residues serine 509 and serine 521. Residues 524 to 536 (KKKKKKKKKDAED) are compositionally biased toward basic residues.

It belongs to the NOP5/NOP56 family. In terms of assembly, core component of box C/D small nucleolar ribonucleoprotein (snoRNP) particles; the core proteins SNU13, NOP56, NOP58 and FBL or FBLL1 assemble stepwise onto the snoRNA. Interacts with NOLC1/Nopp140. Interacts with NOPCHAP1, NUFIP1, RUVBL1 and RUVBL2; NOPCHAP1 bridges the association of NOP58 with RUVBL1:RUVBL2 and NUFIP1. Interacts with PIH1D1. Part of the small subunit (SSU) processome, composed of more than 70 proteins and the RNA chaperone small nucleolar RNA (snoRNA) U3. Post-translationally, sumoylation is essential for high-affinity binding to snoRNAs.

The protein localises to the nucleus. It localises to the nucleolus. The protein resides in the nucleoplasm. Its function is as follows. Required for the biogenesis of box C/D snoRNAs such as U3, U8 and U14 snoRNAs. Part of the small subunit (SSU) processome, first precursor of the small eukaryotic ribosomal subunit. During the assembly of the SSU processome in the nucleolus, many ribosome biogenesis factors, an RNA chaperone and ribosomal proteins associate with the nascent pre-rRNA and work in concert to generate RNA folding, modifications, rearrangements and cleavage as well as targeted degradation of pre-ribosomal RNA by the RNA exosome. Core component of box C/D small nucleolar ribonucleoprotein (snoRNP) complexes that function in methylation of multiple sites on ribosomal RNAs (rRNAs) and messenger RNAs (mRNAs). This is Nucleolar protein 58 (Nop58) from Mus musculus (Mouse).